The sequence spans 215 residues: Hibernation-associated plasma protein HP-25 (215 aa).

An N-terminal signal peptide occupies residues 1-28 (MPAQRGGALSMGAAGFWILVLSITSALA). Positions 29-96 (DSNNQGNSEP…RPKSAFAVKL (68 aa)) are disordered. 2 stretches are compositionally biased toward pro residues: residues 39–51 (CGPP…PGIP) and 60–77 (LGPP…PQGP). Residues 40–81 (GPPGPPGPPGIPGFPGAPGALGPPGPPGVPGIPGPQGPPGDV) enclose the Collagen-like domain. In terms of domain architecture, C1q spans 85–215 (SSRPKSAFAV…VFFGYLLYGK (131 aa)). N-linked (GlcNAc...) asparagine glycosylation is present at Asn167.

In terms of tissue distribution, plasma; synthesized in the liver.

The protein localises to the secreted. Functionally, plasma proteins HP-20, HP-25, HP-27 and HP-55 form a 140 kDa complex via disulfide bonds in the plasma and are hibernation specific. This Tamias sibiricus (Siberian chipmunk) protein is Hibernation-associated plasma protein HP-25.